Consider the following 340-residue polypeptide: Ferredoxin--NADP reductase (340 aa).

The FAD site is built by D33, Q41, Y46, A86, F120, D286, and T327.

It belongs to the ferredoxin--NADP reductase type 2 family. In terms of assembly, homodimer. Requires FAD as cofactor.

It catalyses the reaction 2 reduced [2Fe-2S]-[ferredoxin] + NADP(+) + H(+) = 2 oxidized [2Fe-2S]-[ferredoxin] + NADPH. The sequence is that of Ferredoxin--NADP reductase from Rickettsia rickettsii (strain Iowa).